We begin with the raw amino-acid sequence, 205 residues long: Outer-membrane lipoprotein carrier protein (205 aa).

The signal sequence occupies residues 1 to 19 (MKKIIICFIFVFSINISFA).

It belongs to the LolA family. In terms of assembly, monomer.

Its subcellular location is the periplasm. Functionally, participates in the translocation of lipoproteins from the inner membrane to the outer membrane. Only forms a complex with a lipoprotein if the residue after the N-terminal Cys is not an aspartate (The Asp acts as a targeting signal to indicate that the lipoprotein should stay in the inner membrane). This is Outer-membrane lipoprotein carrier protein from Francisella tularensis subsp. novicida (strain U112).